Consider the following 122-residue polypeptide: Large ribosomal subunit protein uL14 (122 aa).

The protein belongs to the universal ribosomal protein uL14 family. In terms of assembly, part of the 50S ribosomal subunit. Forms a cluster with proteins L3 and L19. In the 70S ribosome, L14 and L19 interact and together make contacts with the 16S rRNA in bridges B5 and B8.

Its function is as follows. Binds to 23S rRNA. Forms part of two intersubunit bridges in the 70S ribosome. This chain is Large ribosomal subunit protein uL14, found in Xylella fastidiosa (strain M23).